The chain runs to 149 residues: Nucleoside diphosphate kinase (149 aa).

Positions 9, 57, 85, 91, 102, and 112 each coordinate ATP. H115 serves as the catalytic Pros-phosphohistidine intermediate.

Belongs to the NDK family. It depends on Mg(2+) as a cofactor.

It localises to the cytoplasm. The catalysed reaction is a 2'-deoxyribonucleoside 5'-diphosphate + ATP = a 2'-deoxyribonucleoside 5'-triphosphate + ADP. It carries out the reaction a ribonucleoside 5'-diphosphate + ATP = a ribonucleoside 5'-triphosphate + ADP. In terms of biological role, major role in the synthesis of nucleoside triphosphates other than ATP. The ATP gamma phosphate is transferred to the NDP beta phosphate via a ping-pong mechanism, using a phosphorylated active-site intermediate. This is Nucleoside diphosphate kinase from Methanosarcina acetivorans (strain ATCC 35395 / DSM 2834 / JCM 12185 / C2A).